The following is a 182-amino-acid chain: Large ribosomal subunit protein uL22 (182 aa).

Positions 159–182 (AAAKPKATAKKATGEKSKAKTKAN) are disordered.

It belongs to the universal ribosomal protein uL22 family. As to quaternary structure, part of the 50S ribosomal subunit.

This protein binds specifically to 23S rRNA; its binding is stimulated by other ribosomal proteins, e.g. L4, L17, and L20. It is important during the early stages of 50S assembly. It makes multiple contacts with different domains of the 23S rRNA in the assembled 50S subunit and ribosome. In terms of biological role, the globular domain of the protein is located near the polypeptide exit tunnel on the outside of the subunit, while an extended beta-hairpin is found that lines the wall of the exit tunnel in the center of the 70S ribosome. The polypeptide is Large ribosomal subunit protein uL22 (Cytophaga hutchinsonii (strain ATCC 33406 / DSM 1761 / CIP 103989 / NBRC 15051 / NCIMB 9469 / D465)).